The sequence spans 909 residues: Protein translocase subunit SecA (909 aa).

ATP is bound by residues Gln-87, 105–109, and Asp-507; that span reads GEGKT. Disordered regions lie at residues 567–586 and 859–909; these read RRID…PGSS and YSEA…GKLD. Positions 865 to 889 are enriched in basic and acidic residues; sequence EHQSVTEGHEAKQQPFVRKSDKIGR. Residues Cys-893, Cys-895, Cys-904, and His-905 each contribute to the Zn(2+) site. The span at 899–909 shows a compositional bias: basic residues; the sequence is RKYKQCHGKLD.

This sequence belongs to the SecA family. In terms of assembly, monomer and homodimer. Part of the essential Sec protein translocation apparatus which comprises SecA, SecYEG and auxiliary proteins SecDF-YajC and YidC. It depends on Zn(2+) as a cofactor.

Its subcellular location is the cell inner membrane. It localises to the cytoplasm. The catalysed reaction is ATP + H2O + cellular proteinSide 1 = ADP + phosphate + cellular proteinSide 2.. Functionally, part of the Sec protein translocase complex. Interacts with the SecYEG preprotein conducting channel. Has a central role in coupling the hydrolysis of ATP to the transfer of proteins into and across the cell membrane, serving both as a receptor for the preprotein-SecB complex and as an ATP-driven molecular motor driving the stepwise translocation of polypeptide chains across the membrane. This Nitrosomonas eutropha (strain DSM 101675 / C91 / Nm57) protein is Protein translocase subunit SecA.